A 979-amino-acid polypeptide reads, in one-letter code: Calsyntenin-1 (979 aa).

A signal peptide spans 1–28 (MLRRPAPALAPAVRLLLAGLLCGGGVWA). Over 29 to 859 (ARVNKHKPWL…PHPFAVVPST (831 aa)) the chain is Extracellular. 2 consecutive Cadherin domains span residues 38 to 164 (LEPT…APVF) and 165 to 265 (KEKS…SPGW). Residues Asn346, Asn366, and Asn515 are each glycosylated (N-linked (GlcNAc...) asparagine). A helical transmembrane segment spans residues 860 to 880 (ATVVIVVCVSFLVFMIILGVF). The Cytoplasmic segment spans residues 881–979 (RIRAAHQRTM…LEWDDSTLSY (99 aa)). A disordered region spans residues 915–979 (METYEDQHSS…LEWDDSTLSY (65 aa)). The span at 925 to 959 (EEEEEEEEEEESEDGEEEEDITSAESESSEEEEGG) shows a compositional bias: acidic residues.

The protein belongs to the calsyntenin family. In terms of assembly, directly interacts with APBA2. Forms a tripartite complex with APBA2 and APP. The CTF1 chain interacts with PSEN1. Interacts with KLC1 and APBB1. As to quaternary structure, interacts with APBB1; this interaction stabilizes AlcICD metabolism. Interacts with PSEN1. Proteolytically processed under normal cellular conditions. A primary zeta-cleavage generates a large extracellular (soluble) N-terminal domain (sAlc) and a short C-terminal transmembrane fragment (CTF1). A secondary cleavage catalyzed by presenilin gamma-secretase within the transmembrane domain releases the beta-Alc-alpha chain in the extracellular milieu and produces an intracellular fragment (AlcICD). Beta-Alc-alpha secretion is largely dependent upon PSEN1 and PSEN2. This processing is strongly suppressed in the tripartite complex formed with APBA2 and APP, which seems to prevent the association with PSEN1. Highly expressed in the brain (at protein level), with over 90% of the neurons expressing detectable amounts. In the brain, relatively high levels in the cerebral cortex, striatum, hippocampus and thalamus. Moderate levels in the cerebellum. Low levels in the olfactory bulb, midbrain and pons (at protein level). Not detected in Purkinje cells. Expressed at low levels in the lung (at protein level). At the mRNA level, weakly detected in the kidney, lung, skeletal muscle, heart and testis. Not expressed in the sciatic nerve fiber.

It localises to the postsynaptic cell membrane. The protein localises to the endoplasmic reticulum membrane. It is found in the golgi apparatus membrane. The protein resides in the cell projection. Its subcellular location is the neuron projection. It localises to the vesicle. The protein localises to the nucleus. Functionally, postsynaptic adhesion molecule that binds to presynaptic neurexins to mediate both excitatory and inhibitory synapse formation. Promotes synapse development by acting as a cell adhesion molecule at the postsynaptic membrane, which associates with neurexin-alpha at the presynaptic membrane. Also functions as a cargo in axonal anterograde transport by acting as a molecular adapter that promotes KLC1 association with vesicles. Complex formation with APBA2 and APP, stabilizes APP metabolism and enhances APBA2-mediated suppression of beta-APP40 secretion, due to the retardation of intracellular APP maturation. Its function is as follows. As intracellular fragment AlcICD, suppresses APBB1-dependent transactivation stimulated by APP C-terminal intracellular fragment (AICD), most probably by competing with AICD for APBB1-binding. In complex with APBA2 and C99, a C-terminal APP fragment, abolishes C99 interaction with PSEN1 and thus APP C99 cleavage by gamma-secretase, most probably through stabilization of the direct interaction between APBA2 and APP. This chain is Calsyntenin-1, found in Mus musculus (Mouse).